A 171-amino-acid polypeptide reads, in one-letter code: NADH-quinone oxidoreductase subunit I 1 (171 aa).

2 consecutive 4Fe-4S ferredoxin-type domains span residues 39–71 and 81–110; these read IVLTRDPDGQERCVACNLCAVVCPVGCIDLTKA and EHFRINFARCIFCGFCEEACPTSAIQLTPD. Residues Cys51, Cys54, Cys57, Cys61, Cys90, Cys93, Cys96, and Cys100 each contribute to the [4Fe-4S] cluster site.

The protein belongs to the complex I 23 kDa subunit family. NDH-1 is composed of 14 different subunits. Subunits NuoA, H, J, K, L, M, N constitute the membrane sector of the complex. [4Fe-4S] cluster serves as cofactor.

Its subcellular location is the cell inner membrane. It carries out the reaction a quinone + NADH + 5 H(+)(in) = a quinol + NAD(+) + 4 H(+)(out). Functionally, NDH-1 shuttles electrons from NADH, via FMN and iron-sulfur (Fe-S) centers, to quinones in the respiratory chain. The immediate electron acceptor for the enzyme in this species is believed to be ubiquinone. Couples the redox reaction to proton translocation (for every two electrons transferred, four hydrogen ions are translocated across the cytoplasmic membrane), and thus conserves the redox energy in a proton gradient. This is NADH-quinone oxidoreductase subunit I 1 from Rhodopseudomonas palustris (strain BisB5).